We begin with the raw amino-acid sequence, 486 residues long: Nuclear distribution protein PAC1 (486 aa).

A coiled-coil region spans residues 66 to 99 (STVLRLQKKIIDLENEISNLNNIINSTNSDNNGI). WD repeat units lie at residues 119–158 (QCEN…NTIP), 164–205 (AHTR…RTLN), 206–246 (GHEH…SLKS), 249–291 (GHSE…GVAM), 294–328 (GHSH…FPTI), 329–368 (PLEL…IAPH), 389–428 (GHSS…ETGY), and 437–483 (GHDG…NSIK).

It belongs to the WD repeat LIS1/nudF family. In terms of assembly, self-associates. Interacts with NDL1 and dynein.

It localises to the cytoplasm. The protein resides in the cytoskeleton. It is found in the spindle pole. Functionally, positively regulates the activity of the minus-end directed microtubule motor protein dynein. Plays a central role in positioning the mitotic spindle at the bud neck during cell division. Targets cytoplasmic dynein to microtubule plus ends, thereby promoting dynein-mediated microtubule sliding along the bud cortex and consequently the movement of the mitotic spindle to the bud neck. The polypeptide is Nuclear distribution protein PAC1 (Candida albicans (strain SC5314 / ATCC MYA-2876) (Yeast)).